A 325-amino-acid polypeptide reads, in one-letter code: ATP-dependent (S)-NAD(P)H-hydrate dehydratase (325 aa).

The YjeF C-terminal domain occupies 9 to 315; the sequence is LLKKVYNMVP…EHVHTAFLNV (307 aa). Residues glycine 119 and 172–178 each bind (6S)-NADPHX; that span reads NVVEFGR. ATP is bound by residues 211-215 and 230-239; these read KGAKD and GGLKRSGGQG. Aspartate 240 is a binding site for (6S)-NADPHX.

The protein belongs to the NnrD/CARKD family. Mg(2+) is required as a cofactor.

It localises to the cytoplasm. The enzyme catalyses (6S)-NADHX + ATP = ADP + phosphate + NADH + H(+). It catalyses the reaction (6S)-NADPHX + ATP = ADP + phosphate + NADPH + H(+). Functionally, catalyzes the dehydration of the S-form of NAD(P)HX at the expense of ATP, which is converted to ADP. Together with NAD(P)HX epimerase, which catalyzes the epimerization of the S- and R-forms, the enzyme allows the repair of both epimers of NAD(P)HX, a damaged form of NAD(P)H that is a result of enzymatic or heat-dependent hydration. This is ATP-dependent (S)-NAD(P)H-hydrate dehydratase from Phaeosphaeria nodorum (strain SN15 / ATCC MYA-4574 / FGSC 10173) (Glume blotch fungus).